A 314-amino-acid chain; its full sequence is Ribosomal RNA small subunit methyltransferase H (314 aa).

S-adenosyl-L-methionine-binding positions include 35 to 37 (GGH), D55, F79, D101, and Q108.

This sequence belongs to the methyltransferase superfamily. RsmH family.

The protein localises to the cytoplasm. It carries out the reaction cytidine(1402) in 16S rRNA + S-adenosyl-L-methionine = N(4)-methylcytidine(1402) in 16S rRNA + S-adenosyl-L-homocysteine + H(+). Its function is as follows. Specifically methylates the N4 position of cytidine in position 1402 (C1402) of 16S rRNA. This chain is Ribosomal RNA small subunit methyltransferase H, found in Pectobacterium carotovorum subsp. carotovorum (strain PC1).